A 37-amino-acid chain; its full sequence is MKVRPSVKKMCDKCKIIKRRGVIRVICATPKHKQRQG.

It belongs to the bacterial ribosomal protein bL36 family.

This Helicobacter pylori (strain HPAG1) protein is Large ribosomal subunit protein bL36.